The primary structure comprises 523 residues: Cyclin-dependent kinase 17 (523 aa).

Phosphoserine is present on S9. A disordered region spans residues 31 to 55 (IEESSSKDNEPIVKNGRPPTSHSMH). S80, S92, and S105 each carry phosphoserine. A disordered region spans residues 103–123 (MGSDGESDQASGTSSDEVQSP). A compositionally biased stretch (polar residues) spans 110–123 (DQASGTSSDEVQSP). Residues S137, S146, S165, and S180 each carry the phosphoserine modification. The 282-residue stretch at 192 to 473 (YIKLEKLGEG…AEEAMKHVYF (282 aa)) folds into the Protein kinase domain. ATP contacts are provided by residues 198-206 (LGEGTYATV) and K221. Residue D313 is the Proton acceptor of the active site.

Belongs to the protein kinase superfamily. CMGC Ser/Thr protein kinase family. CDC2/CDKX subfamily. Found in a complex containing CABLES1, CDK16 and TDRD7. Interacts with TDRD7. In terms of tissue distribution, brain specific. Within the brain it is concentrated in the neuronal layers of the hippocampus and olfactory bulb, which mostly consist of post-mitotic neurons.

It catalyses the reaction L-seryl-[protein] + ATP = O-phospho-L-seryl-[protein] + ADP + H(+). The catalysed reaction is L-threonyl-[protein] + ATP = O-phospho-L-threonyl-[protein] + ADP + H(+). May play a role in terminally differentiated neurons. Has a Ser/Thr-phosphorylating activity for histone H1. The sequence is that of Cyclin-dependent kinase 17 (Cdk17) from Rattus norvegicus (Rat).